The chain runs to 1256 residues: Topoisomerase 1-associated factor 1 (1256 aa).

A compositionally biased stretch (acidic residues) spans Gly-26 to Glu-38. Disordered regions lie at residues Gly-26 to Tyr-58, Ser-695 to Ala-725, Ser-1052 to Phe-1121, and Ser-1176 to Glu-1256. A compositionally biased stretch (basic and acidic residues) spans Asn-39–Asp-53. The span at Gly-1060 to Pro-1086 shows a compositional bias: basic residues. Composition is skewed to basic and acidic residues over residues Glu-1097–Asp-1110 and Val-1179–Gln-1190. Residues Ser-1194–Ser-1204 are compositionally biased toward acidic residues. Low complexity predominate over residues Asp-1222–Ser-1231.

Belongs to the timeless family. As to quaternary structure, component of the fork protection complex (FPC) consisting of TOF1 and CSM3.

It localises to the nucleus. In terms of biological role, forms a fork protection complex (FPC) with CSM3 and which is required for chromosome segregation during meiosis and DNA damage repair. FPC coordinates leading and lagging strand synthesis and moves with the replication fork. FPC stabilizes replication forks in a configuration that is recognized by replication checkpoint sensors. In Scheffersomyces stipitis (strain ATCC 58785 / CBS 6054 / NBRC 10063 / NRRL Y-11545) (Yeast), this protein is Topoisomerase 1-associated factor 1 (TOF1).